Consider the following 353-residue polypeptide: G-protein coupled estrogen receptor 1 (353 aa).

Topologically, residues 1 to 40 (MEEQTTNVIQIYVNGTEQFNASFDFNITDVKESTDTYEFY) are extracellular. Residues 41–61 (IIGLFLSCLYTIFLFPIGFIG) form a helical membrane-spanning segment. At 62-81 (NILILVVNLNHRERMTIPDL) the chain is on the cytoplasmic side. The helical transmembrane segment at 82 to 102 (YFVNLAVADLILVADSLIEVF) threads the bilayer. The Extracellular segment spans residues 103 to 112 (NLNEKYYDYA). The helical transmembrane segment at 113–133 (VLCTFMSLFLQVNMYSSIFFL) threads the bilayer. Cysteine 115 and cysteine 192 are joined by a disulfide. The Cytoplasmic portion of the chain corresponds to 134–160 (TWMSFDRYVALTSSMSSSPLRTMQHAK). A helical transmembrane segment spans residues 161–181 (LSCSLIWMASILATLLPFTIV). Residues 182-202 (QTQHTGEVHFCFANVFEIQWL) are Extracellular-facing. Residues 203 to 223 (EVTIGFLIPFSIIGLCYSLIV) form a helical membrane-spanning segment. The Cytoplasmic segment spans residues 224 to 245 (RTLMRAQKHKGLWPRRQKALRM). The chain crosses the membrane as a helical span at residues 246–266 (IVVVVLVFFICWLPENVFISI). The Extracellular segment spans residues 267 to 292 (QLLQGTADPSKRTDTTLWHDYPLTGH). The helical transmembrane segment at 293 to 313 (IVNLAAFSNSCLNPIIYSFLG) threads the bilayer. At 314-353 (ETFRDKLRLFIKRKASWSVVYRFCNHTLDLQIPVRSESEV) the chain is on the cytoplasmic side.

It belongs to the G-protein coupled receptor 1 family. As to quaternary structure, homodimer. Heterodimer. Expressed in brain regions that are known to control reproduction and sex behavior. Expressed in ovary, muscle and intestine. Expressed in early germ cells of the testis, including the spermatogonia, spermatocytes, and somatic cells such as Sertoli cells.

The protein resides in the nucleus. It localises to the cytoplasm. The protein localises to the perinuclear region. Its subcellular location is the cytoskeleton. It is found in the cytoplasmic vesicle membrane. The protein resides in the cell membrane. It localises to the basolateral cell membrane. The protein localises to the endoplasmic reticulum membrane. Its subcellular location is the early endosome. It is found in the recycling endosome. The protein resides in the golgi apparatus. It localises to the trans-Golgi network. The protein localises to the golgi apparatus membrane. Its subcellular location is the cell projection. It is found in the dendrite. The protein resides in the dendritic spine membrane. It localises to the axon. The protein localises to the postsynaptic density. Its subcellular location is the mitochondrion membrane. In terms of biological role, membrane G-protein coupled estrogen receptor that binds to 17-beta-estradiol (E2) with high affinity, leading to rapid and transient activation of numerous intracellular signaling pathways. Plays a role in the embryonic development of sensory and motor neurons. Specifically induces apoptosis and reduces proliferation of brain cells. Involved in maintenance of meiotic arrest in oocytes. The protein is G-protein coupled estrogen receptor 1 (gper1) of Danio rerio (Zebrafish).